Here is a 560-residue protein sequence, read N- to C-terminus: Potassium-transporting ATPase potassium-binding subunit (560 aa).

A run of 12 helical transmembrane segments spans residues 11–31 (IFLL…VAFF), 63–83 (SYCT…YGLL), 134–154 (FVTM…TALI), 179–199 (LLPL…PQTF), 254–274 (VIEM…YGHA), 282–302 (WVLF…VYNA), 329–349 (FGIP…TGSV), 356–376 (LTPI…VFGG), 379–399 (VGFV…GLMV), 417–437 (LIVI…AIAL), 488–508 (VVML…AGSL), and 530–550 (VILF…VLIL).

Belongs to the KdpA family. In terms of assembly, the system is composed of three essential subunits: KdpA, KdpB and KdpC.

The protein resides in the cell membrane. Part of the high-affinity ATP-driven potassium transport (or Kdp) system, which catalyzes the hydrolysis of ATP coupled with the electrogenic transport of potassium into the cytoplasm. This subunit binds the extracellular potassium ions and delivers the ions to the membrane domain of KdpB through an intramembrane tunnel. This Geobacillus kaustophilus (strain HTA426) protein is Potassium-transporting ATPase potassium-binding subunit.